We begin with the raw amino-acid sequence, 167 residues long: Small ribosomal subunit protein uS7c (167 aa).

It belongs to the universal ribosomal protein uS7 family. In terms of assembly, part of the 30S ribosomal subunit.

Its subcellular location is the plastid. It is found in the chloroplast. In terms of biological role, one of the primary rRNA binding proteins, it binds directly to 16S rRNA where it nucleates assembly of the head domain of the 30S subunit. The polypeptide is Small ribosomal subunit protein uS7c (rps7) (Tetradesmus obliquus (Green alga)).